A 351-amino-acid chain; its full sequence is Hydroxymethylglutaryl-CoA synthase (351 aa).

Catalysis depends on glutamate 80, which acts as the Proton donor/acceptor. The active-site Acyl-thioester intermediate is the cysteine 112. Positions 112 and 153 each coordinate (3S)-3-hydroxy-3-methylglutaryl-CoA. Residue arginine 199 coordinates CoA. (3S)-3-hydroxy-3-methylglutaryl-CoA contacts are provided by threonine 201 and histidine 234. Histidine 234 acts as the Proton donor/acceptor in catalysis. Lysine 239 is a CoA binding site. (3S)-3-hydroxy-3-methylglutaryl-CoA contacts are provided by arginine 243, asparagine 266, and serine 296.

This sequence belongs to the thiolase-like superfamily. Archaeal HMG-CoA synthase family. In terms of assembly, interacts with acetoacetyl-CoA thiolase that catalyzes the precedent step in the pathway and with a DUF35 protein. The acetoacetyl-CoA thiolase/HMG-CoA synthase complex channels the intermediate via a fused CoA-binding site, which allows for efficient coupling of the endergonic thiolase reaction with the exergonic HMGCS reaction.

It carries out the reaction acetoacetyl-CoA + acetyl-CoA + H2O = (3S)-3-hydroxy-3-methylglutaryl-CoA + CoA + H(+). Its pathway is metabolic intermediate biosynthesis; (R)-mevalonate biosynthesis; (R)-mevalonate from acetyl-CoA: step 2/3. In terms of biological role, catalyzes the condensation of acetyl-CoA with acetoacetyl-CoA to form 3-hydroxy-3-methylglutaryl-CoA (HMG-CoA). Functions in the mevalonate (MVA) pathway leading to isopentenyl diphosphate (IPP), a key precursor for the biosynthesis of isoprenoid compounds that are building blocks of archaeal membrane lipids. This chain is Hydroxymethylglutaryl-CoA synthase, found in Thermoplasma volcanium (strain ATCC 51530 / DSM 4299 / JCM 9571 / NBRC 15438 / GSS1).